The sequence spans 237 residues: Large ribosomal subunit protein uL1 (237 aa).

Belongs to the universal ribosomal protein uL1 family. Part of the 50S ribosomal subunit.

In terms of biological role, binds directly to 23S rRNA. The L1 stalk is quite mobile in the ribosome, and is involved in E site tRNA release. Functionally, protein L1 is also a translational repressor protein, it controls the translation of the L11 operon by binding to its mRNA. In Leptothrix cholodnii (strain ATCC 51168 / LMG 8142 / SP-6) (Leptothrix discophora (strain SP-6)), this protein is Large ribosomal subunit protein uL1.